Here is a 189-residue protein sequence, read N- to C-terminus: Glycerol-3-phosphate acyltransferase (189 aa).

4 consecutive transmembrane segments (helical) span residues M1–L21, Q79–F99, L113–F133, and L151–V171.

Belongs to the PlsY family. In terms of assembly, probably interacts with PlsX.

The protein resides in the cell inner membrane. It carries out the reaction an acyl phosphate + sn-glycerol 3-phosphate = a 1-acyl-sn-glycero-3-phosphate + phosphate. Its pathway is lipid metabolism; phospholipid metabolism. In terms of biological role, catalyzes the transfer of an acyl group from acyl-phosphate (acyl-PO(4)) to glycerol-3-phosphate (G3P) to form lysophosphatidic acid (LPA). This enzyme utilizes acyl-phosphate as fatty acyl donor, but not acyl-CoA or acyl-ACP. This chain is Glycerol-3-phosphate acyltransferase, found in Azotobacter vinelandii (strain DJ / ATCC BAA-1303).